The sequence spans 197 residues: ATP-dependent Clp protease proteolytic subunit (197 aa).

Residue Ser-98 is the Nucleophile of the active site. His-123 is an active-site residue.

Belongs to the peptidase S14 family. In terms of assembly, fourteen ClpP subunits assemble into 2 heptameric rings which stack back to back to give a disk-like structure with a central cavity, resembling the structure of eukaryotic proteasomes. Forms large heterooligomeric complexes consisting of an ATPase component (ClpX, ClpC or ClpE) and a proteolytic component (ClpP).

It is found in the cytoplasm. It catalyses the reaction Hydrolysis of proteins to small peptides in the presence of ATP and magnesium. alpha-casein is the usual test substrate. In the absence of ATP, only oligopeptides shorter than five residues are hydrolyzed (such as succinyl-Leu-Tyr-|-NHMec, and Leu-Tyr-Leu-|-Tyr-Trp, in which cleavage of the -Tyr-|-Leu- and -Tyr-|-Trp bonds also occurs).. Its activity is regulated as follows. Low intrinsic peptidase activity is stimulated by ATP-binding subunits ClpC, ClpE and ClpX. Activity is disregulated by acyldepsipeptides (ADEP) antibiotics, which negate the need for ATP-binding subunits for activation and which makes it into an unregulated protease. Each ClpP subunit binds 1 ADEP molecule, which prevents binding of ClpX. ADEP binding causes conformational shifts that open the gated pore of the ring. Protease activity is inhibited by diisopropylfluoro-phosphate. Protease activity is inhibited by bortezomib, an oncology drug originally designed to work on the human proteasome. Cleaves peptides in various proteins in a process that requires ATP hydrolysis. Has a limited peptidase activity in the absence of ATP-binding subunits ClpC, ClpE or ClpX. Has a chymotrypsin-like activity. Plays a major role in the degradation of misfolded proteins. ClpXP is involved in the complete degradation of the site-2 clipped anti-sigma-W factor RsiW. This results in the release of SigW and the transcriptional activation of genes under the control of the sigma-W factor. Probably the major protease that degrades proteins tagged by trans-translation. This is ATP-dependent Clp protease proteolytic subunit from Bacillus subtilis (strain 168).